Here is a 314-residue protein sequence, read N- to C-terminus: Malate dehydrogenase (314 aa).

NAD(+) contacts are provided by residues 11-16 and Asp-35; that span reads GSGNIG. Residues Arg-84 and Arg-90 each coordinate substrate. Residues Asn-97 and 120–122 contribute to the NAD(+) site; that span reads ITN. Substrate is bound by residues Asn-122 and Arg-153. His-177 serves as the catalytic Proton acceptor.

It belongs to the LDH/MDH superfamily. MDH type 3 family.

The enzyme catalyses (S)-malate + NAD(+) = oxaloacetate + NADH + H(+). In terms of biological role, catalyzes the reversible oxidation of malate to oxaloacetate. In Rickettsia prowazekii (strain Madrid E), this protein is Malate dehydrogenase.